The chain runs to 263 residues: Lens fiber major intrinsic protein (263 aa).

Over 1–9 the chain is Cytoplasmic; that stretch reads MWELRSASF. A helical membrane pass occupies residues 10–29; the sequence is WRAICAEFFASLFYVFFGLG. Residues 30-41 lie on the Extracellular side of the membrane; it reads ASLRWAPGPLHV. The chain crosses the membrane as a helical span at residues 42 to 59; it reads LQVALAFGLALATLVQAV. The Cytoplasmic segment spans residues 60-61; that stretch reads GH. Residues 62–77 constitute an intramembrane region (discontinuously helical); it reads ISGAHVNPAVTFAFLV. The short motif at 68–70 is the NPA 1 element; it reads NPA. At 78-82 the chain is on the cytoplasmic side; sequence GSQMS. A helical transmembrane segment spans residues 83–106; the sequence is LLRAICYMVAQLLGAVAGAAVLYS. Residues 107-127 are Extracellular-facing; sequence VTPPAVRGNLALNTLHPGVSV. The chain crosses the membrane as a helical span at residues 128 to 148; it reads GQATIVEIFLTLQFVLCIFAT. Residues 149-156 lie on the Cytoplasmic side of the membrane; the sequence is YDERRNGR. A helical membrane pass occupies residues 157-175; that stretch reads LGSVALAVGFSLTLGHLFG. At 176–178 the chain is on the extracellular side; it reads MYY. An intramembrane region (discontinuously helical) is located at residues 179–193; the sequence is TGAGMNPARSFAPAI. Positions 184–186 match the NPA 2 motif; that stretch reads NPA. Residues 194–200 lie on the Extracellular side of the membrane; sequence LTRNFTN. The chain crosses the membrane as a helical span at residues 201 to 222; sequence HWVYWVGPVIGAGLGSLLYDFL. Residues 223–263 are Cytoplasmic-facing; the sequence is LFPRLKSVSERLSILKGSRPSESNGQPEVTGEPVELKTQAL. Residues 227 to 237 are interaction with CALM; the sequence is LKSVSERLSIL. S235 is subject to Phosphoserine. Residues 239–263 form a disordered region; the sequence is GSRPSESNGQPEVTGEPVELKTQAL. Position 243 is a phosphoserine; by PKA (S243). S245 carries the post-translational modification Phosphoserine. Deamidated asparagine is present on N246.

This sequence belongs to the MIP/aquaporin (TC 1.A.8) family. In terms of assembly, homotetramer; each monomer provides an independent water pore. Two homotetramers on opposing membranes can dimerize, forming a cell-cell junction. Interacts with CALM; the calcium-calmodulin/CALM complex interacts with the cytoplasmic domains of two aquaporins, leading to channel closure. Interacts with BFSP1 (via C-terminus); prevents calcium-dependent inhibition of the water channel activity. Post-translationally, fatty acylated at Met-1 and Lys-238. The acyl modifications, in decreasing order of ion abundance, are: oleoyl (C18:1) &gt; palmitoyl (C16:0) &gt; stearoyl (C18:0) &gt; eicosenoyl (C20:1) &gt; dihomo-gamma-linolenoyl (C20:3) &gt; palmitoleoyl (C16:1) &gt; eicosadienoyl (C20:2). Subject to partial proteolytic cleavage in the eye lens core. Partial proteolysis promotes interactions between tetramers from adjoining membranes. Major component of lens fiber junctions.

It is found in the cell membrane. It localises to the cell junction. The catalysed reaction is H2O(in) = H2O(out). The water channel activity is inhibited by calcium through calmodulin/CALM. Functionally, aquaporins form homotetrameric transmembrane channels, with each monomer independently mediating water transport across the plasma membrane along its osmotic gradient. Specifically expressed in lens fiber cells, this aquaporin is crucial for maintaining lens water homeostasis and transparency. Beyond water permeability, it also acts as a cell-to-cell adhesion molecule, forming thin junctions between lens fiber cells that are essential for maintaining the ordered structure and transparency of the lens. The polypeptide is Lens fiber major intrinsic protein (Bos taurus (Bovine)).